Here is a 750-residue protein sequence, read N- to C-terminus: Glutathione biosynthesis bifunctional protein GshAB (750 aa).

The glutamate--cysteine ligase stretch occupies residues M1–A333. Residues Q32–Y51 are disordered. Positions K489–F747 constitute an ATP-grasp domain. Residue S516–R574 participates in ATP binding. Residues D696, E717, and N719 each coordinate Mg(2+). 3 residues coordinate Mn(2+): D696, E717, and N719.

This sequence in the N-terminal section; belongs to the glutamate--cysteine ligase type 1 family. Type 2 subfamily. In terms of assembly, monomer. Requires Mg(2+) as cofactor. The cofactor is Mn(2+).

It carries out the reaction L-cysteine + L-glutamate + ATP = gamma-L-glutamyl-L-cysteine + ADP + phosphate + H(+). The catalysed reaction is gamma-L-glutamyl-L-cysteine + glycine + ATP = glutathione + ADP + phosphate + H(+). It functions in the pathway sulfur metabolism; glutathione biosynthesis; glutathione from L-cysteine and L-glutamate: step 1/2. Its pathway is sulfur metabolism; glutathione biosynthesis; glutathione from L-cysteine and L-glutamate: step 2/2. In terms of biological role, synthesizes glutathione from L-glutamate and L-cysteine via gamma-L-glutamyl-L-cysteine. This chain is Glutathione biosynthesis bifunctional protein GshAB, found in Streptococcus agalactiae serotype III (strain NEM316).